A 121-amino-acid polypeptide reads, in one-letter code: UPF0102 protein Strop_1320 (121 aa).

It belongs to the UPF0102 family.

This Salinispora tropica (strain ATCC BAA-916 / DSM 44818 / JCM 13857 / NBRC 105044 / CNB-440) protein is UPF0102 protein Strop_1320.